The primary structure comprises 378 residues: Probable cytochrome oxidase subunit 2 (378 aa).

The Cytoplasmic segment spans residues 1-8 (MIDYEFLR). The chain crosses the membrane as a helical span at residues 9–28 (FIWWVLVIVLLIGFSVTDGF). Over 29–79 (DMGVTALLPVIGKKEVERRIMINTIAPHWDGNQVWLLTAGGAIFAAWPIVY) the chain is Periplasmic. The chain crosses the membrane as a helical span at residues 80-99 (AVSFSGFYIALVLVLAALFL). The Cytoplasmic portion of the chain corresponds to 100 to 122 (RPLGFEYRAKIDNPTWRSVWDWG). Residues 123 to 142 (LFAGGFVPALVFGVAFGNLL) traverse the membrane as a helical segment. The Periplasmic portion of the chain corresponds to 143–164 (QGVPFHFNELTQVTYTGSFFEL). The chain crosses the membrane as a helical span at residues 165–184 (LNPFALLCGVISLSMLVTHG). At 185–205 (ANWLQMKTTEALRDRARTVSQ) the chain is on the cytoplasmic side. The chain crosses the membrane as a helical span at residues 206-224 (IGSIVTLIAFVLAGVWLYS). At 225-261 (KDGYVVTSTIDHFAPSSPMNKEVAVETGAWFRNFNEM) the chain is on the periplasmic side. Residues 262-281 (PILWIFPALAVVAALLNAAF) traverse the membrane as a helical segment. Over 282–291 (SKANRCGFAF) the chain is Cytoplasmic. The chain crosses the membrane as a helical span at residues 292-311 (FFSALTMAGVIITAAVSMFP). At 312–335 (FVMPSSSHPEQSLLMWDSTSSELT) the chain is on the periplasmic side. Residues 336 to 355 (LTLMLIFAVVFVVIALAYTI) traverse the membrane as a helical segment. Residues 356–378 (WSYSKMFGRLDANFIDKNKHSLY) are Cytoplasmic-facing.

The protein belongs to the cytochrome ubiquinol oxidase subunit 2 family. In terms of assembly, heterodimer of subunits I and II.

The protein localises to the cell inner membrane. Probable cytochrome oxidase subunit. This is Probable cytochrome oxidase subunit 2 from Haemophilus influenzae (strain ATCC 51907 / DSM 11121 / KW20 / Rd).